Reading from the N-terminus, the 493-residue chain is Insulinoma-associated protein 2 (493 aa).

A compositionally biased stretch (basic residues) spans 1–12 (MPRGFLVKRTKR). An SNAG domain region spans residues 1-20 (MPRGFLVKRTKRSGSSYRAR). The interval 1-77 (MPRGFLVKRT…PGPSPARPAG (77 aa)) is disordered. A C2H2-type 1; atypical zinc finger spans residues 203-223 (FICQLCKHQYADPFALAQHRC). A C2H2-type 2 zinc finger spans residues 231–253 (YRCPECDKVFSCPANLASHRRWH). The segment at 248 to 310 (SHRRWHKPRP…SGDGQHRDSA (63 aa)) is disordered. The span at 267–276 (PHAPLTPPDP) shows a compositional bias: pro residues. Residues 283–294 (ENGRVPRTDDQH) are compositionally biased toward basic and acidic residues. 3 consecutive C2H2-type zinc fingers follow at residues 354–376 (FVCP…LGTH), 398–420 (FACP…RLWH), and 452–475 (FSCK…NKCH).

As to expression, expressed in spleen, stomach, liver, kidney and testis. In the pancreas, expressed in islet cells, including insulin-producing beta-cells, but not in acinar cells (at protein level). In the brain, expressed in the neuronal cells of the cerebral cortex, the Purkinje cells of the cerebellum and the hippocampal region including CA1 and CA3 (at protein level).

It localises to the cytoplasm. The protein resides in the nucleus. Functionally, may function as a growth suppressor or tumor suppressor in liver cells and in certain neurons. In Mus musculus (Mouse), this protein is Insulinoma-associated protein 2 (Insm2).